A 1822-amino-acid chain; its full sequence is Sperm flagellar protein 2 (1822 aa).

Residues 1–105 (MSEILCQWLN…LLYQLYIALQ (105 aa)) enclose the Calponin-homology (CH) domain. Coiled-coil stretches lie at residues 227–260 (KALEAQKMMKKKKEAEDVADEIKKFEALIKKDLQ), 321–396 (AHEA…KQAK), 732–758 (NQAQLLEEALTGCNRNLTEVERKKAQK), and 871–909 (CEKVKEILTTEIAKKKNKVEKKLEEKEAEKKAAASLAEL). Disordered regions lie at residues 896 to 1004 (KEAE…VPQP), 1278 to 1327 (EEEK…EATP), 1664 to 1718 (SIPS…NNEK), and 1803 to 1822 (EHVQGSDGERSPSRHTEEKK). Over residues 911-920 (LPTPPPAPPP) the composition is skewed to pro residues. Composition is skewed to basic and acidic residues over residues 921-930 (EPEKEKEIHQ) and 949-968 (PHGKQESLQEGKGKKGETAL). Low complexity predominate over residues 975–987 (KGKSSGGKVPVKK). Composition is skewed to basic and acidic residues over residues 1278–1292 (EEEKENQPADPKEKS) and 1303–1314 (KEPPKKKQEDKK). The tract at residues 1324-1676 (EATPVIVTTE…SAEKTSSTDA (353 aa)) is interaction with IFT20. Residues 1686–1712 (EENAAREERKLKDDTEKREQKDEEIPE) adopt a coiled-coil conformation. A compositionally biased stretch (basic and acidic residues) spans 1688-1708 (NAAREERKLKDDTEKREQKDE).

As to quaternary structure, interacts (via C-terminus) with IFT20. Interacts with DYNC1I2.

The protein localises to the cell projection. The protein resides in the cilium. It localises to the flagellum. Its subcellular location is the cytoplasm. It is found in the golgi apparatus. Its function is as follows. Required for correct axoneme development in spermatozoa. Important for normal development of the manchette and sperm head morphology. Essential for male fertility. Plays a role in localization of the intraflagellar transport protein IFT20 to the manchette, suggesting function as an adapter for dynein-mediated protein transport during spermatogenesis. Also plays a role in bone growth where it seems to be required for normal osteoblast differentiation. The sequence is that of Sperm flagellar protein 2 (SPEF2) from Homo sapiens (Human).